Here is a 308-residue protein sequence, read N- to C-terminus: Cytochrome b (308 aa).

A run of 4 helical transmembrane segments spans residues 1-21 (FGSL…LMAM), 45-66 (WLIR…YLHI), 81-101 (WNTG…GYVL), and 146-166 (FFAL…VHLT). H51 and H65 together coordinate heme b. H150 and H164 together coordinate heme b. Position 169 (H169) interacts with a ubiquinone. A run of 3 helical transmembrane segments spans residues 194-214 (IKDI…AMFS), 256-276 (LGGV…PFLH), and 288-308 (LSQL…WVGS).

Belongs to the cytochrome b family. As to quaternary structure, the cytochrome bc1 complex contains 11 subunits: 3 respiratory subunits (MT-CYB, CYC1 and UQCRFS1), 2 core proteins (UQCRC1 and UQCRC2) and 6 low-molecular weight proteins (UQCRH/QCR6, UQCRB/QCR7, UQCRQ/QCR8, UQCR10/QCR9, UQCR11/QCR10 and a cleavage product of UQCRFS1). This cytochrome bc1 complex then forms a dimer. It depends on heme b as a cofactor.

It localises to the mitochondrion inner membrane. Component of the ubiquinol-cytochrome c reductase complex (complex III or cytochrome b-c1 complex) that is part of the mitochondrial respiratory chain. The b-c1 complex mediates electron transfer from ubiquinol to cytochrome c. Contributes to the generation of a proton gradient across the mitochondrial membrane that is then used for ATP synthesis. This Scytalopus magellanicus (Magellanic tapaculo) protein is Cytochrome b (MT-CYB).